The chain runs to 397 residues: Argininosuccinate synthase (397 aa).

Residue 7–15 coordinates ATP; that stretch reads AFSGGLDTT. An L-citrulline-binding site is contributed by Y84. Residue G114 coordinates ATP. L-aspartate-binding residues include T116, N120, and D121. N120 provides a ligand contact to L-citrulline. L-citrulline-binding residues include R124, S170, S179, E254, and Y266.

The protein belongs to the argininosuccinate synthase family. Type 1 subfamily. As to quaternary structure, homotetramer.

It localises to the cytoplasm. It catalyses the reaction L-citrulline + L-aspartate + ATP = 2-(N(omega)-L-arginino)succinate + AMP + diphosphate + H(+). It participates in amino-acid biosynthesis; L-arginine biosynthesis; L-arginine from L-ornithine and carbamoyl phosphate: step 2/3. The chain is Argininosuccinate synthase from Haloquadratum walsbyi (strain DSM 16790 / HBSQ001).